We begin with the raw amino-acid sequence, 494 residues long: 3-octaprenyl-4-hydroxybenzoate carboxy-lyase (494 aa).

N172 contributes to the Mn(2+) binding site. Prenylated FMN-binding positions include 175–177 (IYR), 189–191 (RWL), and 194–195 (RG). E238 provides a ligand contact to Mn(2+). D287 functions as the Proton donor in the catalytic mechanism.

This sequence belongs to the UbiD family. As to quaternary structure, homohexamer. Requires prenylated FMN as cofactor. It depends on Mn(2+) as a cofactor.

The protein localises to the cell membrane. It carries out the reaction a 4-hydroxy-3-(all-trans-polyprenyl)benzoate + H(+) = a 2-(all-trans-polyprenyl)phenol + CO2. The protein operates within cofactor biosynthesis; ubiquinone biosynthesis. In terms of biological role, catalyzes the decarboxylation of 3-octaprenyl-4-hydroxy benzoate to 2-octaprenylphenol, an intermediate step in ubiquinone biosynthesis. The protein is 3-octaprenyl-4-hydroxybenzoate carboxy-lyase of Escherichia coli O9:H4 (strain HS).